The following is a 118-amino-acid chain: NADH-ubiquinone oxidoreductase chain 3 (118 aa).

3 helical membrane-spanning segments follow: residues 5 to 25 (YIYIFIFFWGAFFISCLLIFL), 62 to 82 (LIAILFMIFDLEIMYLFPWSI), and 87 to 107 (GSFFGVWAIFLFLIILTVGFI).

This sequence belongs to the complex I subunit 3 family.

It localises to the mitochondrion membrane. It catalyses the reaction a ubiquinone + NADH + 5 H(+)(in) = a ubiquinol + NAD(+) + 4 H(+)(out). Core subunit of the mitochondrial membrane respiratory chain NADH dehydrogenase (Complex I) that is believed to belong to the minimal assembly required for catalysis. Complex I functions in the transfer of electrons from NADH to the respiratory chain. The immediate electron acceptor for the enzyme is believed to be ubiquinone. In Acanthamoeba castellanii (Amoeba), this protein is NADH-ubiquinone oxidoreductase chain 3 (ND3).